The primary structure comprises 116 residues: uncharacterized protein (116 aa).

The helical transmembrane segment at 89–109 (VGFVILILLYILTNPNAIELI) threads the bilayer.

It belongs to the M.jannaschii MJ0023/MJ0349/MJ1072/MJ1074/MJ1107/MJECL16 family.

It is found in the membrane. This is an uncharacterized protein from Methanocaldococcus jannaschii (strain ATCC 43067 / DSM 2661 / JAL-1 / JCM 10045 / NBRC 100440) (Methanococcus jannaschii).